We begin with the raw amino-acid sequence, 298 residues long: MYRTALRPSQSALRAIRSTTSPSALVSSGARRFASTTSAPKKKSTWKGAAVRWGLAVAAVYYYNTSPIFSDELPETAGTAPSQLTDADLPTVDAIVEEKRRQAAEHAAARKAAQAAAKAAATPATPSESVEEQITKAEAEAEAVPEGDSKPRSESTEGVIPEAGASPEALQEEADAQGAFNPETGEINWDCPCLGGMAHGPCGEEFKAAFSCFVYSTEEPKGMDCIEKFSHMQDCFRKYPEVYGAELADDEEAERASAAAPAAEGTPAKEEPVENKKEEALEPATHDATAANNNKKQQ.

The N-terminal 33 residues, 1 to 33 (MYRTALRPSQSALRAIRSTTSPSALVSSGARRF), are a transit peptide targeting the mitochondrion. The Mitochondrial matrix portion of the chain corresponds to 34 to 52 (ASTTSAPKKKSTWKGAAVR). Residues 53–69 (WGLAVAAVYYYNTSPIF) traverse the membrane as a helical; Signal-anchor for type II membrane protein segment. The Mitochondrial intermembrane segment spans residues 70–298 (SDELPETAGT…TAANNNKKQQ (229 aa)). The interval 101-159 (RQAAEHAAARKAAQAAAKAAATPATPSESVEEQITKAEAEAEAVPEGDSKPRSESTEGV) is disordered. A compositionally biased stretch (low complexity) spans 110 to 121 (RKAAQAAAKAAA). Intrachain disulfides connect Cys191–Cys193, Cys202–Cys235, and Cys212–Cys225. One can recognise a CHCH domain in the interval 199–243 (HGPCGEEFKAAFSCFVYSTEEPKGMDCIEKFSHMQDCFRKYPEVY). 2 short sequence motifs (cx9C motif) span residues 202 to 212 (CGEEFKAAFSC) and 225 to 235 (CIEKFSHMQDC). Positions 248–298 (ADDEEAERASAAAPAAEGTPAKEEPVENKKEEALEPATHDATAANNNKKQQ) are disordered. Positions 256–266 (ASAAAPAAEGT) are enriched in low complexity. Residues 267–280 (PAKEEPVENKKEEA) show a composition bias toward basic and acidic residues.

In terms of assembly, monomer. The cofactor is Cu(2+). It depends on Zn(2+) as a cofactor.

It localises to the mitochondrion inner membrane. Required for the import and folding of small cysteine-containing proteins (small Tim) in the mitochondrial intermembrane space (IMS). Forms a redox cycle with ERV1 that involves a disulfide relay system. Precursor proteins to be imported into the IMS are translocated in their reduced form into the mitochondria. The oxidized form of MIA40 forms a transient intermolecular disulfide bridge with the reduced precursor protein, resulting in oxidation of the precursor protein that now contains an intramolecular disulfide bond and is able to undergo folding in the IMS. The protein is Mitochondrial intermembrane space import and assembly protein 40 (mia-40) of Neurospora crassa (strain ATCC 24698 / 74-OR23-1A / CBS 708.71 / DSM 1257 / FGSC 987).